We begin with the raw amino-acid sequence, 209 residues long: Ribosomal RNA large subunit methyltransferase E (209 aa).

S-adenosyl-L-methionine is bound by residues G63, W65, D83, D99, and D124. Catalysis depends on K164, which acts as the Proton acceptor.

This sequence belongs to the class I-like SAM-binding methyltransferase superfamily. RNA methyltransferase RlmE family.

The protein resides in the cytoplasm. The catalysed reaction is uridine(2552) in 23S rRNA + S-adenosyl-L-methionine = 2'-O-methyluridine(2552) in 23S rRNA + S-adenosyl-L-homocysteine + H(+). Its function is as follows. Specifically methylates the uridine in position 2552 of 23S rRNA at the 2'-O position of the ribose in the fully assembled 50S ribosomal subunit. This is Ribosomal RNA large subunit methyltransferase E from Pseudoalteromonas translucida (strain TAC 125).